Here is a 134-residue protein sequence, read N- to C-terminus: Large ribosomal subunit protein uL22 (134 aa).

It belongs to the universal ribosomal protein uL22 family. In terms of assembly, part of the 50S ribosomal subunit.

Functionally, this protein binds specifically to 23S rRNA; its binding is stimulated by other ribosomal proteins, e.g. L4, L17, and L20. It is important during the early stages of 50S assembly. It makes multiple contacts with different domains of the 23S rRNA in the assembled 50S subunit and ribosome. Its function is as follows. The globular domain of the protein is located near the polypeptide exit tunnel on the outside of the subunit, while an extended beta-hairpin is found that lines the wall of the exit tunnel in the center of the 70S ribosome. In Gluconacetobacter diazotrophicus (strain ATCC 49037 / DSM 5601 / CCUG 37298 / CIP 103539 / LMG 7603 / PAl5), this protein is Large ribosomal subunit protein uL22.